A 176-amino-acid chain; its full sequence is ATP-dependent protease subunit HslV (176 aa).

Thr-2 is a catalytic residue. Positions 157, 160, and 163 each coordinate Na(+).

This sequence belongs to the peptidase T1B family. HslV subfamily. As to quaternary structure, a double ring-shaped homohexamer of HslV is capped on each side by a ring-shaped HslU homohexamer. The assembly of the HslU/HslV complex is dependent on binding of ATP.

Its subcellular location is the cytoplasm. The catalysed reaction is ATP-dependent cleavage of peptide bonds with broad specificity.. Its activity is regulated as follows. Allosterically activated by HslU binding. In terms of biological role, protease subunit of a proteasome-like degradation complex believed to be a general protein degrading machinery. The sequence is that of ATP-dependent protease subunit HslV from Photorhabdus laumondii subsp. laumondii (strain DSM 15139 / CIP 105565 / TT01) (Photorhabdus luminescens subsp. laumondii).